Reading from the N-terminus, the 586-residue chain is Lipoprotein LpqB (586 aa).

The signal sequence occupies residues 1–17 (MVRSVFALVFAAVLLGG). C18 carries N-palmitoyl cysteine lipidation. Residue C18 is the site of S-diacylglycerol cysteine attachment. The segment at 26–45 (APQAIGTVERPAPSNLPKPI) is disordered.

This sequence belongs to the LpqB lipoprotein family.

Its subcellular location is the cell membrane. In Mycobacterium ulcerans (strain Agy99), this protein is Lipoprotein LpqB.